The chain runs to 260 residues: 3-dehydroquinate dehydratase (260 aa).

3-dehydroquinate contacts are provided by residues 50 to 52 (EWR) and R86. Catalysis depends on H148, which acts as the Proton donor/acceptor. Catalysis depends on K175, which acts as the Schiff-base intermediate with substrate. Residues R217, S236, and Q240 each contribute to the 3-dehydroquinate site.

The protein belongs to the type-I 3-dehydroquinase family. As to quaternary structure, homodimer.

It catalyses the reaction 3-dehydroquinate = 3-dehydroshikimate + H2O. Its pathway is metabolic intermediate biosynthesis; chorismate biosynthesis; chorismate from D-erythrose 4-phosphate and phosphoenolpyruvate: step 3/7. Functionally, involved in the third step of the chorismate pathway, which leads to the biosynthesis of aromatic amino acids. Catalyzes the cis-dehydration of 3-dehydroquinate (DHQ) and introduces the first double bond of the aromatic ring to yield 3-dehydroshikimate. The polypeptide is 3-dehydroquinate dehydratase (Aromatoleum aromaticum (strain DSM 19018 / LMG 30748 / EbN1) (Azoarcus sp. (strain EbN1))).